Consider the following 301-residue polypeptide: Probable alpha-L-glutamate ligase (301 aa).

The ATP-grasp domain occupies 104 to 287 (LQLLSRKGVG…IAGMVIDFIE (184 aa)). Residues lysine 141, 178–179 (EY), aspartate 187, and 211–213 (RSN) each bind ATP. Residues aspartate 248, glutamate 260, and asparagine 262 each contribute to the Mg(2+) site. Positions 248, 260, and 262 each coordinate Mn(2+).

Belongs to the RimK family. The cofactor is Mg(2+). Mn(2+) is required as a cofactor.

This Pseudoalteromonas translucida (strain TAC 125) protein is Probable alpha-L-glutamate ligase.